Here is a 309-residue protein sequence, read N- to C-terminus: Small ribosomal subunit protein uS7m (309 aa).

The tract at residues 39 to 86 (DSTTSSRLPPRVQIQQQQQQRTQPYSTETTPPPNSNNGDLAGIEGQPP) is disordered. Residues 51–61 (QIQQQQQQRTQ) are compositionally biased toward low complexity.

It belongs to the universal ribosomal protein uS7 family. As to quaternary structure, component of the mitochondrial small ribosomal subunit (mt-SSU). Mature N.crassa 74S mitochondrial ribosomes consist of a small (37S) and a large (54S) subunit. The 37S small subunit contains a 16S ribosomal RNA (16S mt-rRNA) and 32 different proteins. The 54S large subunit contains a 23S rRNA (23S mt-rRNA) and 42 different proteins.

It is found in the mitochondrion. Its function is as follows. Component of the mitochondrial ribosome (mitoribosome), a dedicated translation machinery responsible for the synthesis of mitochondrial genome-encoded proteins, including at least some of the essential transmembrane subunits of the mitochondrial respiratory chain. The mitoribosomes are attached to the mitochondrial inner membrane and translation products are cotranslationally integrated into the membrane. This Neurospora crassa (strain ATCC 24698 / 74-OR23-1A / CBS 708.71 / DSM 1257 / FGSC 987) protein is Small ribosomal subunit protein uS7m (rsm7).